Here is a 528-residue protein sequence, read N- to C-terminus: MGDSLTLEGKAQLITRNLQELLGEDKMKEILKERPLRIYWGTATTGKPHVAYFVPMSKIADFLKAGCEVTILFADLHAYLDNMKAPWDLLELRTRYYEQVIQAMLQSIGVPLERLRFIRGTEFQLSKEYTLDVYRLSSVVTQHDAKKAGAEVVKQVEHPLLSGLLYPGLQALDEEYLKVDAQFGGVDQRKIFTFAEKYLPALGYAKRIHLMNPMVPGLTGAKMSSSEEESKIDLLDSPADVKKKLKKAFCEPGNVENNGVLSFVRHVLFPLKSEFVVLRDEKFGGNKTYTDFETLEKDFAEELVHPGDLKASVEKALNKLLHPIREKFNSPEMKKLSNDAYPDASKQKSVPKGSTKNSGTEEIDPSLLDLRVGKILSVSQHPDADSLYVESVDVGEANPRCVVSGLVQYVPSDQLLGRSVVLLCNLKPQKMRGIESQGMLLCASTEGEQKQVEPLDPPSGSAPGERIYIEGYENGEPEGELKPKKKVFEKLQVDFRISDDLCAQWKGKNFLTKLGSVTCKTLRGGSIG.

Tyr39 lines the L-tyrosine pocket. Residues 44–52 (TTGKPHVAY) carry the 'HIGH' region motif. L-tyrosine-binding residues include Tyr166, Gln170, Asp173, and Gln188. The 'KMSKS' region signature appears at 222 to 226 (KMSSS). Residues 242-247 (KKKLKK) carry the Nuclear localization signal motif. Residues 332–362 (EMKKLSNDAYPDASKQKSVPKGSTKNSGTEE) form a disordered region. The region spanning 364-468 (DPSLLDLRVG…SGSAPGERIY (105 aa)) is the tRNA-binding domain.

Belongs to the class-I aminoacyl-tRNA synthetase family. Homodimer.

It localises to the cytoplasm. The protein resides in the nucleus. The catalysed reaction is tRNA(Tyr) + L-tyrosine + ATP = L-tyrosyl-tRNA(Tyr) + AMP + diphosphate + H(+). In terms of biological role, catalyzes the attachment of tyrosine to tRNA(Tyr) in a two-step reaction: tyrosine is first activated by ATP to form Tyr-AMP and then transferred to the acceptor end of tRNA(Tyr). This Xenopus laevis (African clawed frog) protein is Tyrosine--tRNA ligase, cytoplasmic (yars1).